A 225-amino-acid polypeptide reads, in one-letter code: Doublesex- and mab-3-related transcription factor C1 (225 aa).

Positions 1 to 12 (MQRPSGSREVRK) are enriched in basic and acidic residues. Disordered stretches follow at residues 1–49 (MQRP…SHVH) and 179–216 (QTRHQPCGMPGTAGERGLQLPNPSMPPRPASSGSLPSG). Residues 27–37 (RVKKHVVRRQK) are compositionally biased toward basic residues.

It belongs to the DMRT family.

This is Doublesex- and mab-3-related transcription factor C1 (Dmrtc1) from Rattus norvegicus (Rat).